We begin with the raw amino-acid sequence, 151 residues long: UPF0756 membrane protein GTNG_2661 (151 aa).

4 helical membrane-spanning segments follow: residues 5 to 25 (VLFLLLLLAIGVIAKNQSLII), 53 to 73 (WGVTVITVAVLAPIATGEIGF), 86 to 106 (WIALLFGIFVALIAKGGVMLL), and 116 to 136 (LVLGTVIAVSLFHGVAVGPLI).

Belongs to the UPF0756 family.

Its subcellular location is the cell membrane. The chain is UPF0756 membrane protein GTNG_2661 from Geobacillus thermodenitrificans (strain NG80-2).